We begin with the raw amino-acid sequence, 1193 residues long: Falcilysin (1193 aa).

Residue His129 coordinates Zn(2+). Catalysis depends on Glu132, which acts as the Proton acceptor. Residues His133 and Glu243 each contribute to the Zn(2+) site. The segment at 376 to 404 (DKTNNHNNNHSNNQSSENNGYSNGSHSSD) is disordered. Residues 380-394 (NHNNNHSNNQSSENN) show a composition bias toward low complexity. A compositionally biased stretch (polar residues) spans 395–404 (GYSNGSHSSD). Residues 583–619 (LLEGDENYAQEQENLEKQELKKRIENFNEQEKEQVIK) adopt a coiled-coil conformation.

The protein belongs to the peptidase M16 family. As to quaternary structure, monomer. Component of the hemozoin formation complex (HFC) composed of falcipains FP2A and/or FP2B, plasmepsins PMII, PMIII/HAP and PMIV, heme detoxifying protein HDP and falcilysin FLN. The HFC complex is involved in hemoglobin degradation and detoxification of heme in the food vacuole during the asexual blood stage. Requires Zn(2+) as cofactor. Does not require processing for targeting to the food vacuole or maturation.

The protein resides in the vacuole membrane. It is found in the plastid. The protein localises to the apicoplast. Its subcellular location is the vesicle. In terms of biological role, in the food vacuole, acts downstream of proteases plasmepsins PMI and PMII and falcipains during the catabolism of host hemoglobin by cleaving peptide fragments of alpha and beta hemoglobin subunits generated by PMI and PMII and falcipains. In the apicoplast, degrades apicoplast transit peptides after their cleavage. Prefers bulky hydrophobic amino acids in the P1' position at both acidic and neutral pH. At P2', prefers hydrophobic residues at acidic pH; at neutral pH, these same residues are abundant but prefers Arg. At P3', prefers hydrophobic residues, especially Met, at both pH conditions. At P4' and P5', prefers acidic residues at acidic pH, however, at neutral pH, the enzyme is less selective at these positions. The optimal site cleavage at acidic pH is YNEHS-|-FFMEE and, at neutral pH, MKRHS-|-FRMRG. This Plasmodium falciparum (isolate 3D7) protein is Falcilysin.